We begin with the raw amino-acid sequence, 512 residues long: Methionine--tRNA ligase (512 aa).

Residues 12 to 22 carry the 'HIGH' region motif; sequence YYVNDVPHIGH. The 'KMSKS' region signature appears at 295–299; it reads KISKS. Lys298 contacts ATP.

This sequence belongs to the class-I aminoacyl-tRNA synthetase family. MetG type 2B subfamily. In terms of assembly, monomer.

The protein localises to the cytoplasm. It carries out the reaction tRNA(Met) + L-methionine + ATP = L-methionyl-tRNA(Met) + AMP + diphosphate. In terms of biological role, is required not only for elongation of protein synthesis but also for the initiation of all mRNA translation through initiator tRNA(fMet) aminoacylation. The polypeptide is Methionine--tRNA ligase (Rickettsia felis (strain ATCC VR-1525 / URRWXCal2) (Rickettsia azadi)).